Consider the following 388-residue polypeptide: Chalcone synthase D (388 aa).

The active site involves cysteine 164.

Belongs to the thiolase-like superfamily. Chalcone/stilbene synthases family.

It catalyses the reaction (E)-4-coumaroyl-CoA + 3 malonyl-CoA + 3 H(+) = 2',4,4',6'-tetrahydroxychalcone + 3 CO2 + 4 CoA. It participates in secondary metabolite biosynthesis; flavonoid biosynthesis. The primary product of this enzyme is 4,2',4',6'-tetrahydroxychalcone (also termed naringenin-chalcone or chalcone) which can under specific conditions spontaneously isomerize into naringenin. This chain is Chalcone synthase D (CHSD), found in Ipomoea nil (Japanese morning glory).